A 345-amino-acid chain; its full sequence is Annexin A9 (345 aa).

Annexin repeat units lie at residues 41–112 (FSVD…ALLQ), 113–184 (PAAQ…ALSK), 197–266 (NLEE…SLAS), and 270–341 (NTAL…ALCR).

This sequence belongs to the annexin family. In terms of assembly, homodimer.

Its function is as follows. May act as a low affinity receptor for acetylcholine. This chain is Annexin A9 (Anxa9), found in Mus musculus (Mouse).